Reading from the N-terminus, the 237-residue chain is DCN1-like protein 5 (237 aa).

The residue at position 41 (S41) is a Phosphoserine. The DCUN1 domain maps to 46 to 232 (FSRKKCLAWF…LLDEFVEWQK (187 aa)).

In terms of assembly, part of a complex that contains DCUN1D5, CUL1 and RBX1; this interaction is bridged by CUL1. Interacts (via the DCUN1 domain) with the unneddylated cullins: interacts with CUL1, CUL2, CUL3, CUL4A, CUL4B and CUL5; these interactions promote the cullin neddylation and the identity of the cullin dictates the affinity of the interaction. Interacts (via DCUN1 domain) with UBE2M (N-terminally acetylated form) and probably with UBE2F (N-terminally acetylated form). May also interact with regulators or subunits of cullin-RING ligases such as RBX1, RNF7, ELOB and DDB1; these interactions are bridged by cullins. Interacts with CAND1; this interaction is bridged by cullins and strongly inhibits the neddylation of cullins. These CAND-cullin-DCNL complexes can only be neddylated in the presence of a substrate adapter. In terms of processing, phosphorylation at Ser-41 is independent of cullin's interaction. Phosphorylated in response to both TICAM1 and MYD88 dependent Toll-like receptor (TLR) pathway activation. Phosphorylated in response to IL1B stimulation.

The protein localises to the nucleus. It localises to the cytoplasm. Its subcellular location is the cytoskeleton. The protein resides in the spindle. Functionally, contributes to the neddylation of all cullins by transferring NEDD8 from N-terminally acetylated NEDD8-conjugating E2s enzyme to different cullin C-terminal domain-RBX complexes which is necessary for the activation of cullin-RING E3 ubiquitin ligases (CRLs). May play a role in DNA damage response and may participate in cell proliferation and anchorage-independent cell growth. This Rattus norvegicus (Rat) protein is DCN1-like protein 5.